Here is a 750-residue protein sequence, read N- to C-terminus: MFSIKPGPRKLPIDNPSLLSWNITDGDLNSKLNTLEYLNCVTNIINACGVYPQDLKDREIISTFHAEKVINDLLKNDYKISLSPDTTYRELNKAAQRSITAPDRIGEGKIWVYQRDTMVERGDNSGVHQYGPAEHFTHIISDKPSPKDKYVAYAINIPDYELAADVYNINVTSPSGQQETFKILINPEHLRQTLERKSLTAVQKSQCEIITPKKPGEAILHAFNATYQQIRENMSEFARCHYGYIQIPPVTTFRADGPETPEEEKGYWFHAYQPEDLCTIHNPMGDLQDFIALVKDAKKFGIDIIPDYTFNFMGIGGSGKNDLDYPSADIRAKISKDIEGGIPGYWQGQVLIPFTIDPVTKERKQIHPEDIHLTAKDFEASKDNISKDEWENLHALKEKRLNGMPKTPPKSDQVIMLQNQYVREMRKYGVRGLRYDAAKHSKHEQIERSITPPLKNYNERLHNTNLFNPKYHEKAVMNYMEYLVTCQLDEEQMSSLLYERDDLSAIDFSLLMKTIKAFSFGGDLQTLASKPSSTISSIPSKRRILININHDFPNNGNLFNDFLFNHQQDEQLAMAYMAALPFSRPLVYWDGQVLKSTTEIKNYDGSTRVGGEAWLNKGCSTYQQLYNEFHALYIDKAGIWSAFEGVFATKNVLAFSRGDSVNINHSPHDGLVIINKGNEEVEGAWPNKLQPGKYKNMGSNSVNIIINNTRKIIPPGKAFMLRGGTLNINIPGRSALLLGKTGEPLNYLYL.

This is an uncharacterized protein from Escherichia coli O157:H7.